A 210-amino-acid chain; its full sequence is Na(+)-translocating NADH-quinone reductase subunit D (210 aa).

6 helical membrane passes run 9–29 (SVLIGPIVSNNPIALQILGVC), 42–62 (LVMTIALTAVCALSNLFISLI), 72–92 (IIVQMTIIASLVIVVDQVLQA), 103–123 (VFVGLIITNCIVMGRAEAFAM), 131–151 (FMDGLGNGLGYGAILLSVGFV), and 178–198 (NGLLLLPPSAFFLIGALIWII).

The protein belongs to the NqrDE/RnfAE family. In terms of assembly, composed of six subunits; NqrA, NqrB, NqrC, NqrD, NqrE and NqrF.

It is found in the cell inner membrane. It carries out the reaction a ubiquinone + n Na(+)(in) + NADH + H(+) = a ubiquinol + n Na(+)(out) + NAD(+). In terms of biological role, NQR complex catalyzes the reduction of ubiquinone-1 to ubiquinol by two successive reactions, coupled with the transport of Na(+) ions from the cytoplasm to the periplasm. NqrA to NqrE are probably involved in the second step, the conversion of ubisemiquinone to ubiquinol. The sequence is that of Na(+)-translocating NADH-quinone reductase subunit D from Shewanella piezotolerans (strain WP3 / JCM 13877).